We begin with the raw amino-acid sequence, 316 residues long: 4-hydroxy-3-methylbut-2-enyl diphosphate reductase (316 aa).

Cys-12 is a binding site for [4Fe-4S] cluster. Positions 41 and 74 each coordinate (2E)-4-hydroxy-3-methylbut-2-enyl diphosphate. Residues His-41 and His-74 each coordinate dimethylallyl diphosphate. The isopentenyl diphosphate site is built by His-41 and His-74. Position 96 (Cys-96) interacts with [4Fe-4S] cluster. Residue His-124 participates in (2E)-4-hydroxy-3-methylbut-2-enyl diphosphate binding. His-124 is a binding site for dimethylallyl diphosphate. Residue His-124 coordinates isopentenyl diphosphate. The active-site Proton donor is Glu-126. Thr-169 serves as a coordination point for (2E)-4-hydroxy-3-methylbut-2-enyl diphosphate. A [4Fe-4S] cluster-binding site is contributed by Cys-199. Positions 227, 228, 229, and 271 each coordinate (2E)-4-hydroxy-3-methylbut-2-enyl diphosphate. Dimethylallyl diphosphate contacts are provided by Ser-227, Ser-228, Asn-229, and Ser-271. The isopentenyl diphosphate site is built by Ser-227, Ser-228, Asn-229, and Ser-271.

It belongs to the IspH family. It depends on [4Fe-4S] cluster as a cofactor.

The enzyme catalyses isopentenyl diphosphate + 2 oxidized [2Fe-2S]-[ferredoxin] + H2O = (2E)-4-hydroxy-3-methylbut-2-enyl diphosphate + 2 reduced [2Fe-2S]-[ferredoxin] + 2 H(+). It carries out the reaction dimethylallyl diphosphate + 2 oxidized [2Fe-2S]-[ferredoxin] + H2O = (2E)-4-hydroxy-3-methylbut-2-enyl diphosphate + 2 reduced [2Fe-2S]-[ferredoxin] + 2 H(+). It functions in the pathway isoprenoid biosynthesis; dimethylallyl diphosphate biosynthesis; dimethylallyl diphosphate from (2E)-4-hydroxy-3-methylbutenyl diphosphate: step 1/1. It participates in isoprenoid biosynthesis; isopentenyl diphosphate biosynthesis via DXP pathway; isopentenyl diphosphate from 1-deoxy-D-xylulose 5-phosphate: step 6/6. Functionally, catalyzes the conversion of 1-hydroxy-2-methyl-2-(E)-butenyl 4-diphosphate (HMBPP) into a mixture of isopentenyl diphosphate (IPP) and dimethylallyl diphosphate (DMAPP). Acts in the terminal step of the DOXP/MEP pathway for isoprenoid precursor biosynthesis. In Stenotrophomonas maltophilia (strain K279a), this protein is 4-hydroxy-3-methylbut-2-enyl diphosphate reductase.